A 196-amino-acid polypeptide reads, in one-letter code: 3-isopropylmalate dehydratase small subunit (196 aa).

The protein belongs to the LeuD family. LeuD type 1 subfamily. As to quaternary structure, heterodimer of LeuC and LeuD.

The catalysed reaction is (2R,3S)-3-isopropylmalate = (2S)-2-isopropylmalate. It participates in amino-acid biosynthesis; L-leucine biosynthesis; L-leucine from 3-methyl-2-oxobutanoate: step 2/4. Its function is as follows. Catalyzes the isomerization between 2-isopropylmalate and 3-isopropylmalate, via the formation of 2-isopropylmaleate. This chain is 3-isopropylmalate dehydratase small subunit, found in Streptococcus gordonii (strain Challis / ATCC 35105 / BCRC 15272 / CH1 / DL1 / V288).